The sequence spans 174 residues: Bacterial proteasome activator (174 aa).

The disordered stretch occupies residues 153-174; it reads QGALPPGVGKSGQHGHGTGQYL. The span at 161–174 shows a compositional bias: gly residues; sequence GKSGQHGHGTGQYL. A HbYX motif motif is present at residues 172–174; the sequence is QYL.

This sequence belongs to the Bpa family. As to quaternary structure, forms a homooligomeric, either hexameric or heptameric, ring-like structure which stacks co-axially with the proteasomal alpha-rings.

In terms of biological role, interacts with the core proteasome alpha-subunit (PrcA) through its C-terminal hydrophobic-tyrosine-X motif (HbYX motif). Interaction of Bpa with the proteasome stimulates proteasomal peptidase and casein degradation activity, which suggests Bpa could play a role in the removal of non-native or damaged proteins by influencing the conformation of the proteasome complex upon interaction. In Mycobacterium bovis (strain ATCC BAA-935 / AF2122/97), this protein is Bacterial proteasome activator (bpa).